The sequence spans 574 residues: Proline--tRNA ligase (574 aa).

This sequence belongs to the class-II aminoacyl-tRNA synthetase family. ProS type 1 subfamily. As to quaternary structure, homodimer.

The protein resides in the cytoplasm. The catalysed reaction is tRNA(Pro) + L-proline + ATP = L-prolyl-tRNA(Pro) + AMP + diphosphate. In terms of biological role, catalyzes the attachment of proline to tRNA(Pro) in a two-step reaction: proline is first activated by ATP to form Pro-AMP and then transferred to the acceptor end of tRNA(Pro). As ProRS can inadvertently accommodate and process non-cognate amino acids such as alanine and cysteine, to avoid such errors it has two additional distinct editing activities against alanine. One activity is designated as 'pretransfer' editing and involves the tRNA(Pro)-independent hydrolysis of activated Ala-AMP. The other activity is designated 'posttransfer' editing and involves deacylation of mischarged Ala-tRNA(Pro). The misacylated Cys-tRNA(Pro) is not edited by ProRS. This is Proline--tRNA ligase from Fervidobacterium nodosum (strain ATCC 35602 / DSM 5306 / Rt17-B1).